Here is a 387-residue protein sequence, read N- to C-terminus: Formate-dependent phosphoribosylglycinamide formyltransferase (387 aa).

Residues 12–13 and E72 each bind N(1)-(5-phospho-beta-D-ribosyl)glycinamide; that span reads EL. ATP-binding positions include R104, K145, 150-155, 185-188, and E193; these read SSGKGQ and EEFI. One can recognise an ATP-grasp domain in the interval 109–300; it reads DLAAKDLKLL…EFELHIRAIL (192 aa). Positions 258 and 270 each coordinate Mg(2+). N(1)-(5-phospho-beta-D-ribosyl)glycinamide-binding positions include D277, K348, and 355-356; that span reads RR.

The protein belongs to the PurK/PurT family. Homodimer.

The enzyme catalyses N(1)-(5-phospho-beta-D-ribosyl)glycinamide + formate + ATP = N(2)-formyl-N(1)-(5-phospho-beta-D-ribosyl)glycinamide + ADP + phosphate + H(+). The protein operates within purine metabolism; IMP biosynthesis via de novo pathway; N(2)-formyl-N(1)-(5-phospho-D-ribosyl)glycinamide from N(1)-(5-phospho-D-ribosyl)glycinamide (formate route): step 1/1. Its function is as follows. Involved in the de novo purine biosynthesis. Catalyzes the transfer of formate to 5-phospho-ribosyl-glycinamide (GAR), producing 5-phospho-ribosyl-N-formylglycinamide (FGAR). Formate is provided by PurU via hydrolysis of 10-formyl-tetrahydrofolate. The polypeptide is Formate-dependent phosphoribosylglycinamide formyltransferase (Leptospira borgpetersenii serovar Hardjo-bovis (strain JB197)).